A 391-amino-acid chain; its full sequence is Probable acridone synthase 3 (391 aa).

Cys164 is a catalytic residue.

It belongs to the thiolase-like superfamily. Chalcone/stilbene synthases family.

It catalyses the reaction N-methylanthraniloyl-CoA + 3 malonyl-CoA + 3 H(+) = 1,3-dihydroxy-N-methylacridone + 3 CO2 + 4 CoA + H2O. In Ruta graveolens (Common rue), this protein is Probable acridone synthase 3 (ACS3).